The following is a 241-amino-acid chain: Proteasome subunit beta type-6 (241 aa).

Positions 1–19 (MATIASEYSSEASNTPIEH) are excised as a propeptide.

Belongs to the peptidase T1B family. As to quaternary structure, the 26S proteasome consists of a 20S proteasome core and two 19S regulatory subunits. The 20S proteasome core is composed of 28 subunits that are arranged in four stacked rings, resulting in a barrel-shaped structure. The two end rings are each formed by seven alpha subunits, and the two central rings are each formed by seven beta subunits. The catalytic chamber with the active sites is on the inside of the barrel.

Its subcellular location is the cytoplasm. It localises to the nucleus. Its function is as follows. Non-catalytic component of the proteasome which degrades poly-ubiquitinated proteins in the cytoplasm and in the nucleus. It is essential for the regulated turnover of proteins and for the removal of misfolded proteins. The proteasome is a multicatalytic proteinase complex that is characterized by its ability to cleave peptides with Arg, Phe, Tyr, Leu, and Glu adjacent to the leaving group at neutral or slightly basic pH. It has an ATP-dependent proteolytic activity. The protein is Proteasome subunit beta type-6 (PRE7) of Saccharomyces cerevisiae (strain ATCC 204508 / S288c) (Baker's yeast).